The following is a 153-amino-acid chain: CRIB domain-containing protein RIC4 (153 aa).

Residues 99–112 enclose the CRIB domain; the sequence is IGVPTNVKHVSHIG.

In terms of assembly, interacts with ARAC4/ROP2 and ARAC11/ROP1. As to expression, expressed in roots, leaves, stems, flowers, siliques and pollen.

The protein resides in the cell membrane. Its function is as follows. Functions as a downstream effector of Rho-related GTP binding proteins of the 'Rho of Plants' (ROPs) family. Participates in the propagation of ROP GTPase signals in specific cellular responses. Required for actin cortical microfilament assembly. Activated by ARAC4/ROP2 to promote the assembly of cortical actin microfilaments required for lobe formation and lateral expansion of pavement cells. Interaction with, and activation by ARAC4/ROP2 is inhibited by RIC1. Functions as a downstream effector of ARAC11/ROP1 to promote the assembly of apical F-actin associated with vesicle accumulation in the tip of the growing pollen tube. Counteracts the ARAC11/ROP1-RIC3 pathway, which activates calcium signaling that leads to apical F-actin disassembly associated with exocytosis, to control actin dynamics and pollen tube apical growth. Downstream of ARAC11/ROP1, is involved in the growth responses to the root-colonizing endophytic fungus P.indica. The chain is CRIB domain-containing protein RIC4 (RIC4) from Arabidopsis thaliana (Mouse-ear cress).